Consider the following 1464-residue polypeptide: Bridge-like lipid transfer protein family member 3B (1464 aa).

The Chorein N-terminal domain maps to 3-94 (GIIKKQILKH…DKVIMEMSTC (92 aa)). 2 disordered regions span residues 267-297 (STEQ…TQTS) and 409-436 (DHNV…YPLK). Residues 278–297 (PTQSSTVVASAQQVKTTQTS) show a composition bias toward polar residues. Phosphoserine occurs at positions 414, 418, 774, 935, and 1009. Disordered regions lie at residues 1066–1089 (SKEE…PKER), 1164–1183 (LQNY…EGAQ), and 1392–1413 (QRSV…QSAN). Polar residues-rich tracts occupy residues 1164–1182 (LQNY…SEGA) and 1394–1413 (SVTQ…QSAN). A coiled-coil region spans residues 1418 to 1456 (SFDFTREQLMEENESLKQELAKAKMALAEAHLEKDALLH).

As to quaternary structure, monomer. Homodimer (via N-terminus). Associates with the Golgi-associated retrograde protein (GARP) complex. Interacts with GARP complex component VPS52. Interacts (via C-terminal coiled-coil domain) with STX6.

The protein localises to the cytoplasm. It localises to the cytosol. It is found in the early endosome. In terms of biological role, tube-forming lipid transport protein which mediates the transfer of lipids between membranes at organelle contact sites. Required for retrograde traffic of vesicle clusters in the early endocytic pathway to the Golgi complex. The sequence is that of Bridge-like lipid transfer protein family member 3B from Homo sapiens (Human).